The primary structure comprises 201 residues: Large ribosomal subunit protein uL4 (201 aa).

The disordered stretch occupies residues 45–72 (AQKTRAEVTGSGKKPWRQKGTGRARAGS).

The protein belongs to the universal ribosomal protein uL4 family. As to quaternary structure, part of the 50S ribosomal subunit.

In terms of biological role, one of the primary rRNA binding proteins, this protein initially binds near the 5'-end of the 23S rRNA. It is important during the early stages of 50S assembly. It makes multiple contacts with different domains of the 23S rRNA in the assembled 50S subunit and ribosome. Functionally, forms part of the polypeptide exit tunnel. This chain is Large ribosomal subunit protein uL4, found in Shewanella frigidimarina (strain NCIMB 400).